The primary structure comprises 160 residues: Phosphopantetheine adenylyltransferase (160 aa).

Residue Ser8 coordinates substrate. ATP contacts are provided by residues 8-9 (SF) and His16. Lys40, Thr72, and Arg86 together coordinate substrate. ATP is bound by residues 87-89 (GLR), Glu97, and 122-128 (YSFLSSS).

It belongs to the bacterial CoaD family. As to quaternary structure, homohexamer. Mg(2+) is required as a cofactor.

Its subcellular location is the cytoplasm. It carries out the reaction (R)-4'-phosphopantetheine + ATP + H(+) = 3'-dephospho-CoA + diphosphate. The protein operates within cofactor biosynthesis; coenzyme A biosynthesis; CoA from (R)-pantothenate: step 4/5. Its function is as follows. Reversibly transfers an adenylyl group from ATP to 4'-phosphopantetheine, yielding dephospho-CoA (dPCoA) and pyrophosphate. The chain is Phosphopantetheine adenylyltransferase from Synechococcus sp. (strain CC9311).